The following is a 430-amino-acid chain: Tapasin (430 aa).

Residues 1 to 15 form the signal peptide; that stretch reads MAAGLRLLLAGLCWS. Over 16–399 the chain is Lumenal; it reads QFRVEDAASP…TEGPHLEDIT (384 aa). Cys34 and Cys99 are oxidised to a cystine. Positions 61–128 are disordered; it reads GDAETPPEPG…PDARSPPTAG (68 aa). A glycan (N-linked (GlcNAc...) asparagine) is linked at Asn78. A compositionally biased stretch (polar residues) spans 101–111; sequence LNPTNPQTGSD. Ig-like C1-type domains are found at residues 139 to 273 and 278 to 382; these read PQYG…LQLH and PKVT…MRVS. The cysteines at positions 299 and 368 are disulfide-linked. Residues 316 to 342 form a disordered region; sequence RAGGSGTSQSPRDTVMDSWTSGHRQAA. The segment covering 322–338 has biased composition (polar residues); the sequence is TSQSPRDTVMDSWTSGH. A helical membrane pass occupies residues 400-417; it reads GLFLVAFVLCGLIRWLYP. Over 418 to 430 the chain is Cytoplasmic; it reads KAARPKEETKKSQ.

In terms of assembly, interacts with TAP1 and is thus a subunit of the TAP complex. Interaction with TAP1 is TAP2 independent and is required for efficient peptide-TAP interaction. Obligatory mediator for the interaction between newly assembled MHC class I molecules, calreticulin, ERp57 and TAP. Up to 4 MHC class I/tapasin complexes bind to 1 TAP.

It localises to the endoplasmic reticulum membrane. Functionally, involved in the association of MHC class I with transporter associated with antigen processing (TAP) and in the assembly of MHC class I with peptide (peptide loading). The chain is Tapasin (TAPBP) from Gallus gallus (Chicken).